The following is a 554-amino-acid chain: Chaperonin GroEL (554 aa).

ATP contacts are provided by residues 30–33, lysine 51, 87–91, glycine 416, and aspartate 503; these read TLGP and DGTTT.

It belongs to the chaperonin (HSP60) family. As to quaternary structure, forms a cylinder of 14 subunits composed of two heptameric rings stacked back-to-back. Interacts with the co-chaperonin GroES.

Its subcellular location is the cytoplasm. The enzyme catalyses ATP + H2O + a folded polypeptide = ADP + phosphate + an unfolded polypeptide.. In terms of biological role, together with its co-chaperonin GroES, plays an essential role in assisting protein folding. The GroEL-GroES system forms a nano-cage that allows encapsulation of the non-native substrate proteins and provides a physical environment optimized to promote and accelerate protein folding. The polypeptide is Chaperonin GroEL (Holospora obtusa).